The following is a 156-amino-acid chain: Small ribosomal subunit protein uS7 (156 aa).

This sequence belongs to the universal ribosomal protein uS7 family. As to quaternary structure, part of the 30S ribosomal subunit. Contacts proteins S9 and S11.

In terms of biological role, one of the primary rRNA binding proteins, it binds directly to 16S rRNA where it nucleates assembly of the head domain of the 30S subunit. Is located at the subunit interface close to the decoding center, probably blocks exit of the E-site tRNA. In Treponema denticola (strain ATCC 35405 / DSM 14222 / CIP 103919 / JCM 8153 / KCTC 15104), this protein is Small ribosomal subunit protein uS7.